Consider the following 118-residue polypeptide: Succinate dehydrogenase assembly factor 1, mitochondrial (118 aa).

Residues 14–16 carry the LYR motif 1; required for interaction with HSC20 motif; sequence LYR. The short motif at 53-55 is the LYR motif 2; not required for interaction with HSC20 element; it reads LYR. Residues 53–65 are interaction with SDHB; sequence LYRRGRRQLQMLR. The disordered stretch occupies residues 72–118; that stretch reads MGAFVRTRGPTEESNGAGAPGTLSGEGDDPRKPLDSMRTPKTPLDGR.

It belongs to the complex I LYR family. SDHAF1 subfamily. In terms of assembly, interacts with SDHB within an SDHA-SDHB subcomplex. Also interacts with the iron-sulfur transfer complex formed by HSC20, HSPA9 and ISCU through direct binding to HSC20. Binding of SDHAF1 to SDHB precedes and is necessary for recruitment of the iron-sulfur transfer complex by SDHAF1.

It localises to the mitochondrion matrix. Functionally, plays an essential role in the assembly of succinate dehydrogenase (SDH), an enzyme complex (also referred to as respiratory complex II) that is a component of both the tricarboxylic acid (TCA) cycle and the mitochondrial electron transport chain, and which couples the oxidation of succinate to fumarate with the reduction of ubiquinone (coenzyme Q) to ubiquinol. Promotes maturation of the iron-sulfur protein subunit SDHB of the SDH catalytic dimer, protecting it from the deleterious effects of oxidants. May act together with SDHAF3. Contributes to iron-sulfur cluster incorporation into SDHB by binding to SDHB and recruiting the iron-sulfur transfer complex formed by HSC20, HSPA9 and ISCU through direct binding to HSC20. The sequence is that of Succinate dehydrogenase assembly factor 1, mitochondrial from Bos taurus (Bovine).